Reading from the N-terminus, the 289-residue chain is Ribosomal protein L11 methyltransferase (289 aa).

4 residues coordinate S-adenosyl-L-methionine: Thr142, Gly163, Asp185, and Asn226.

It belongs to the methyltransferase superfamily. PrmA family.

Its subcellular location is the cytoplasm. It carries out the reaction L-lysyl-[protein] + 3 S-adenosyl-L-methionine = N(6),N(6),N(6)-trimethyl-L-lysyl-[protein] + 3 S-adenosyl-L-homocysteine + 3 H(+). Methylates ribosomal protein L11. In Legionella pneumophila subsp. pneumophila (strain Philadelphia 1 / ATCC 33152 / DSM 7513), this protein is Ribosomal protein L11 methyltransferase.